Consider the following 240-residue polypeptide: Ubiquinone biosynthesis O-methyltransferase (240 aa).

The S-adenosyl-L-methionine site is built by arginine 36, glycine 66, aspartate 87, and methionine 129.

It belongs to the methyltransferase superfamily. UbiG/COQ3 family.

The enzyme catalyses a 3-demethylubiquinol + S-adenosyl-L-methionine = a ubiquinol + S-adenosyl-L-homocysteine + H(+). It catalyses the reaction a 3-(all-trans-polyprenyl)benzene-1,2-diol + S-adenosyl-L-methionine = a 2-methoxy-6-(all-trans-polyprenyl)phenol + S-adenosyl-L-homocysteine + H(+). It participates in cofactor biosynthesis; ubiquinone biosynthesis. Its function is as follows. O-methyltransferase that catalyzes the 2 O-methylation steps in the ubiquinone biosynthetic pathway. The protein is Ubiquinone biosynthesis O-methyltransferase of Pelagibacter ubique (strain HTCC1062).